The sequence spans 549 residues: Glucose-6-phosphate isomerase (549 aa).

The active-site Proton donor is the glutamate 355. Residues histidine 386 and lysine 514 contribute to the active site.

This sequence belongs to the GPI family.

The protein resides in the cytoplasm. It catalyses the reaction alpha-D-glucose 6-phosphate = beta-D-fructose 6-phosphate. The protein operates within carbohydrate biosynthesis; gluconeogenesis. It participates in carbohydrate degradation; glycolysis; D-glyceraldehyde 3-phosphate and glycerone phosphate from D-glucose: step 2/4. In terms of biological role, catalyzes the reversible isomerization of glucose-6-phosphate to fructose-6-phosphate. This Salmonella paratyphi C (strain RKS4594) protein is Glucose-6-phosphate isomerase.